A 661-amino-acid chain; its full sequence is UvrABC system protein B (661 aa).

In terms of domain architecture, Helicase ATP-binding spans 25–182 (AGLNSKKRSQ…NDLINLQYKR (158 aa)). 38–45 (GITGSGKT) is an ATP binding site. The short motif at 91-114 (YYDYYQPEAYIARTDTFIEKDSSI) is the Beta-hairpin element. The Helicase C-terminal domain occupies 430–592 (QVEDLISEIQ…IIPKTINRAI (163 aa)). Residues 621 to 656 (KANINKLNKEMLKAASNLEFEQAAKLRDQLKTLEAA) form the UVR domain.

The protein belongs to the UvrB family. Forms a heterotetramer with UvrA during the search for lesions. Interacts with UvrC in an incision complex.

It localises to the cytoplasm. Functionally, the UvrABC repair system catalyzes the recognition and processing of DNA lesions. A damage recognition complex composed of 2 UvrA and 2 UvrB subunits scans DNA for abnormalities. Upon binding of the UvrA(2)B(2) complex to a putative damaged site, the DNA wraps around one UvrB monomer. DNA wrap is dependent on ATP binding by UvrB and probably causes local melting of the DNA helix, facilitating insertion of UvrB beta-hairpin between the DNA strands. Then UvrB probes one DNA strand for the presence of a lesion. If a lesion is found the UvrA subunits dissociate and the UvrB-DNA preincision complex is formed. This complex is subsequently bound by UvrC and the second UvrB is released. If no lesion is found, the DNA wraps around the other UvrB subunit that will check the other stand for damage. This is UvrABC system protein B from Rickettsia akari (strain Hartford).